A 97-amino-acid polypeptide reads, in one-letter code: Protein RnfH (97 aa).

Belongs to the UPF0125 (RnfH) family.

This is Protein RnfH from Halorhodospira halophila (strain DSM 244 / SL1) (Ectothiorhodospira halophila (strain DSM 244 / SL1)).